The sequence spans 516 residues: Bifunctional purine biosynthesis protein PurH (516 aa).

Residues 1-150 (MSDDRKQIKR…KNHPSVAVVV (150 aa)) enclose the MGS-like domain.

This sequence belongs to the PurH family.

It carries out the reaction (6R)-10-formyltetrahydrofolate + 5-amino-1-(5-phospho-beta-D-ribosyl)imidazole-4-carboxamide = 5-formamido-1-(5-phospho-D-ribosyl)imidazole-4-carboxamide + (6S)-5,6,7,8-tetrahydrofolate. The catalysed reaction is IMP + H2O = 5-formamido-1-(5-phospho-D-ribosyl)imidazole-4-carboxamide. Its pathway is purine metabolism; IMP biosynthesis via de novo pathway; 5-formamido-1-(5-phospho-D-ribosyl)imidazole-4-carboxamide from 5-amino-1-(5-phospho-D-ribosyl)imidazole-4-carboxamide (10-formyl THF route): step 1/1. It functions in the pathway purine metabolism; IMP biosynthesis via de novo pathway; IMP from 5-formamido-1-(5-phospho-D-ribosyl)imidazole-4-carboxamide: step 1/1. This chain is Bifunctional purine biosynthesis protein PurH, found in Corynebacterium ammoniagenes (Brevibacterium ammoniagenes).